Here is a 124-residue protein sequence, read N- to C-terminus: UPF0102 protein Haur_0145 (124 aa).

This sequence belongs to the UPF0102 family.

This is UPF0102 protein Haur_0145 from Herpetosiphon aurantiacus (strain ATCC 23779 / DSM 785 / 114-95).